The chain runs to 341 residues: MSSTAMVSGDDSLEPTLQSLLDQKTLRWVFVGGKGGVGKTTTSCSLAIQLAKVRKSVLLISTDPAHNLSDAFGQKFGKEARLVDGFDNLSAMEIDPNGSIQDLLSTGGDQADDPMAGLGLGGMMQDLAFSIPGVDEAMSFAEVLKQVKSLSYEVIVFDTAPTGHTLRFLQFPTVLEKALAKLSQLSSQFGPMLNSILGARGGLPGGQNLDEILSKMESLRETIGEVNAQFKDADLTTFVCVCIAEFLSLYETERMIQELTSYQIDTHCIVVNQLLFPGKDSSCEQCKARRKMQKKYLNEIEDLYEDFNVVRMPMLVEEVRGKEKLEKFSDMLVNPYVPPEE.

34–41 serves as a coordination point for ATP; the sequence is KGGVGKTT. D63 is a catalytic residue. 2 residues coordinate ATP: E245 and N272. Zn(2+) contacts are provided by C283 and C286.

It belongs to the arsA ATPase family. Homodimer.

It localises to the cytoplasm. The protein resides in the endoplasmic reticulum. In terms of biological role, ATPase required for the post-translational delivery of tail-anchored (TA) proteins to the endoplasmic reticulum. Recognizes and selectively binds the transmembrane domain of TA proteins in the cytosol. This complex then targets to the endoplasmic reticulum by membrane-bound receptors, where the tail-anchored protein is released for insertion. This process is regulated by ATP binding and hydrolysis. ATP binding drives the homodimer towards the closed dimer state, facilitating recognition of newly synthesized TA membrane proteins. ATP hydrolysis is required for insertion. Subsequently, the homodimer reverts towards the open dimer state, lowering its affinity for the membrane-bound receptor, and returning it to the cytosol to initiate a new round of targeting. The protein is ATPase GET3 of Ajellomyces capsulatus (strain G186AR / H82 / ATCC MYA-2454 / RMSCC 2432) (Darling's disease fungus).